A 322-amino-acid chain; its full sequence is Fructose-1,6-bisphosphatase class 1 (322 aa).

Mg(2+)-binding residues include glutamate 84, aspartate 103, leucine 105, and aspartate 106. Substrate-binding positions include 106 to 109 (DGSS), asparagine 198, and lysine 264. Residue glutamate 270 participates in Mg(2+) binding.

The protein belongs to the FBPase class 1 family. In terms of assembly, homotetramer. Requires Mg(2+) as cofactor.

It localises to the cytoplasm. The enzyme catalyses beta-D-fructose 1,6-bisphosphate + H2O = beta-D-fructose 6-phosphate + phosphate. It functions in the pathway carbohydrate biosynthesis; gluconeogenesis. The polypeptide is Fructose-1,6-bisphosphatase class 1 (Saccharophagus degradans (strain 2-40 / ATCC 43961 / DSM 17024)).